The chain runs to 237 residues: Protein lin-31 (237 aa).

Residues Q12 to L103 constitute a DNA-binding region (fork-head). 2 disordered regions span residues R110–E141 and N195–S237. 2 stretches are compositionally biased toward low complexity: residues S206–S216 and S227–S237.

It localises to the nucleus. Functionally, lin-31 regulates how vulval precursor cells choose their fate. It helps specify three alternative cell fates in vulval development. In Caenorhabditis elegans, this protein is Protein lin-31 (lin-31).